Here is a 278-residue protein sequence, read N- to C-terminus: Probable 3-hydroxybutyryl-CoA dehydrogenase (278 aa).

Belongs to the 3-hydroxyacyl-CoA dehydrogenase family.

The catalysed reaction is (3S)-3-hydroxybutanoyl-CoA + NADP(+) = acetoacetyl-CoA + NADPH + H(+). It participates in lipid metabolism; butanoate metabolism. The protein is Probable 3-hydroxybutyryl-CoA dehydrogenase (hbd) of Deinococcus radiodurans (strain ATCC 13939 / DSM 20539 / JCM 16871 / CCUG 27074 / LMG 4051 / NBRC 15346 / NCIMB 9279 / VKM B-1422 / R1).